We begin with the raw amino-acid sequence, 446 residues long: Probable glycine dehydrogenase (decarboxylating) subunit 1 (446 aa).

The protein belongs to the GcvP family. N-terminal subunit subfamily. As to quaternary structure, the glycine cleavage system is composed of four proteins: P, T, L and H. In this organism, the P 'protein' is a heterodimer of two subunits.

It carries out the reaction N(6)-[(R)-lipoyl]-L-lysyl-[glycine-cleavage complex H protein] + glycine + H(+) = N(6)-[(R)-S(8)-aminomethyldihydrolipoyl]-L-lysyl-[glycine-cleavage complex H protein] + CO2. Functionally, the glycine cleavage system catalyzes the degradation of glycine. The P protein binds the alpha-amino group of glycine through its pyridoxal phosphate cofactor; CO(2) is released and the remaining methylamine moiety is then transferred to the lipoamide cofactor of the H protein. The protein is Probable glycine dehydrogenase (decarboxylating) subunit 1 of Thermococcus onnurineus (strain NA1).